Consider the following 692-residue polypeptide: MSCFSHVMNPITGENSWQEREDDYDYHQEVANAGFGDMLHDWERNQKYFAALRKTIKGMRAAGREVHVLDIGTGTGILSMMALKAGADSVTACEAFLPMANCAAKIFTDNGVGDKVQLIRKRSTDIKIGADLDMPQRANLLVAELLDTELIGEGAISIYNHAHAELLTDDALCIPARARCYAQVAQSPLASQWNSLKILPSLDGEALLRPPEQLKSCKGEAALHDVQLSQLPAGTFRLLTEPIEIFQLDFQRKEKREKQREKLVQLQASQPGAAELVFYWWDIQLDDQGEILLSCAPYWAHPELNELSASKEERVPVANVVPWRDHWMQAIYYVPKPPQLATAGQDFYLSCHHDEYSLWFDAMLEAPAKTVRRHTCSCDLHMTYSRSRIGQLNQAIRNKRYLRYLEATIVPKQSNVLVLGNGCMLGLASAALGAASVQLHEPHRFSRRLIDSIVQHNELKNVKYVENVEQLEDTELIALSHVFAEPYFLNAILPWDNFYFGTLLMKLKDKLPEKVEISPCEARIFALPVEFLDLHKIRAPVGSCEGFDLRLFDEMVERSAEQAVSLVEAQPLWEYPSRALAEPQQLLSVDFANFNVEHHLQGSIELTQSGVCNGIALWVDWHLDKTNNPKSIVSTGPSEAVVPGEFVKWDMFVRQGVHFPRKPTDLSGRVAWSTDFKPLLGQLNFGFSQEKR.

SAM-dependent MTase PRMT-type domains lie at 14 to 359 and 368 to 692; these read ENSW…YSLW and AKTV…QEKR.

It belongs to the class I-like SAM-binding methyltransferase superfamily. Protein arginine N-methyltransferase family. PRMT7 subfamily.

Essential arginine methyltransferase that can both catalyze the formation of omega-N monomethylarginine (MMA) and symmetrical dimethylarginine (sDMA). Specifically mediates the symmetrical dimethylation of arginine residues in the small nuclear ribonucleoproteins SmD1 and SmD3. This chain is Protein arginine N-methyltransferase 7 (Art7), found in Drosophila persimilis (Fruit fly).